A 397-amino-acid chain; its full sequence is DNA-binding protein (397 aa).

Residues Cys-116 and His-118 each coordinate Zn(2+). The interval 129 to 161 (IEMAATSESGVAALKEGRGAVEINRWGRQVVKI) is flexible loop. Zn(2+) is bound by residues Cys-169, Cys-185, Cys-225, Cys-227, Cys-276, and Cys-289. A C-terminal arm, DBP binding region spans residues 335 to 397 (ALLPEGSVNE…IVLESSEEDE (63 aa)). Residues 338–397 (PEGSVNEDENPFGLDNSEDEEEVVPPSPPSPARKRTRTTVAEVHHKKKKKIVLESSEEDE) form a disordered region. Residues 342 to 360 (VNEDENPFGLDNSEDEEEV) are compositionally biased toward acidic residues.

It belongs to the adenoviridae E2A DNA-binding protein family. Homomultimerizes on viral ssDNA bound to pTP. Forms a initiation complex with viral polymerase, pTP and hosts NFIA and POU2F1/OCT1. Interacts with host SRCAP.

It localises to the host nucleus. Functionally, plays a role in the elongation phase of viral strand displacement replication by unwinding the template in an ATP-independent fashion, employing its capacity to form multimers. Also enhances the rate of initiation. Released from template upon second strand synthesis. Assembles in complex with viral pTP, viral pol, host NFIA and host POU2F1/OCT1 on viral origin of replication. Covers the whole ssDNA genome during synthesis. The complementary strand synthesis induces its relese from DNA template. May inhibit cellular transcription mediated by the interaction between host SRCAP and CBP. This Snake adenovirus serotype 1 (SnAdV-1) protein is DNA-binding protein.